A 147-amino-acid chain; its full sequence is Small ribosomal subunit protein uS5 (147 aa).

Positions 9–72 constitute an S5 DRBM domain; that stretch reads FEEVIVDIGR…DDAFKNIVEV (64 aa).

Belongs to the universal ribosomal protein uS5 family. In terms of assembly, part of the 30S ribosomal subunit. Contacts proteins S4 and S8.

With S4 and S12 plays an important role in translational accuracy. Functionally, located at the back of the 30S subunit body where it stabilizes the conformation of the head with respect to the body. This chain is Small ribosomal subunit protein uS5, found in Campylobacter jejuni subsp. jejuni serotype O:6 (strain 81116 / NCTC 11828).